Here is a 628-residue protein sequence, read N- to C-terminus: tRNA (carboxymethyluridine(34)-5-O)-methyltransferase alkbh8 (628 aa).

In terms of domain architecture, RRM spans 43–123; it reads QSLVVANGGL…ITLYLSFVEK (81 aa). Residues 218 to 335 enclose the Fe2OG dioxygenase domain; sequence DPDQLTINQY…RTSFTFRKVR (118 aa). 2-oxoglutarate is bound at residue 225–227; that stretch reads NQY. Residues H236 and D238 each contribute to the Fe cation site. Position 240 (H240) interacts with Zn(2+). Residue H290 participates in Fe cation binding. Positions 326 and 332 each coordinate 2-oxoglutarate. Zn(2+) is bound by residues C339, C341, and C347. A methyltransferase domain region spans residues 410–628; it reads ADVGCGNGKY…GNWCVILEKL (219 aa). The disordered stretch occupies residues 563–582; the sequence is PTNKSKVTPENKEQNEKEHG. A compositionally biased stretch (basic and acidic residues) spans 569–582; sequence VTPENKEQNEKEHG.

It belongs to the alkB family. Requires Fe(2+) as cofactor.

The protein localises to the cytoplasm. Its subcellular location is the nucleus. The enzyme catalyses 5-(carboxymethyl)uridine(34) in tRNA + S-adenosyl-L-methionine = 5-(2-methoxy-2-oxoethyl)uridine(34) in tRNA + S-adenosyl-L-homocysteine. Functionally, catalyzes the methylation of 5-carboxymethyl uridine to 5-methylcarboxymethyl uridine at the wobble position of the anticodon loop in tRNA via its methyltransferase domain. Catalyzes the last step in the formation of 5-methylcarboxymethyl uridine at the wobble position of the anticodon loop in target tRNA. Has a preference for tRNA(Arg) and tRNA(Glu), and does not bind tRNA(Lys). Binds tRNA and catalyzes the iron and alpha-ketoglutarate dependent hydroxylation of 5-methylcarboxymethyl uridine at the wobble position of the anticodon loop in tRNA via its dioxygenase domain, giving rise to 5-(S)-methoxycarbonylhydroxymethyluridine; has a preference for tRNA(Gly). Required for normal survival after DNA damage. May inhibit apoptosis and promote cell survival and angiogenesis. This Xenopus tropicalis (Western clawed frog) protein is tRNA (carboxymethyluridine(34)-5-O)-methyltransferase alkbh8 (alkbh8).